The chain runs to 165 residues: Glucosamine 6-phosphate N-acetyltransferase (165 aa).

The N-acetyltransferase domain maps to Phe-22–Phe-165. Residues Thr-44, Lys-92–His-95, and Glu-104–Val-106 each bind substrate. Arg-114–Ala-119 contributes to the acetyl-CoA binding site. Substrate is bound by residues Tyr-135 to Lys-136 and Arg-164.

This sequence belongs to the acetyltransferase family. GNA1 subfamily.

The catalysed reaction is D-glucosamine 6-phosphate + acetyl-CoA = N-acetyl-D-glucosamine 6-phosphate + CoA + H(+). The protein operates within nucleotide-sugar biosynthesis; UDP-N-acetyl-alpha-D-glucosamine biosynthesis; N-acetyl-alpha-D-glucosamine 1-phosphate from alpha-D-glucosamine 6-phosphate (route I): step 1/2. In Caenorhabditis elegans, this protein is Glucosamine 6-phosphate N-acetyltransferase (gna-1).